Consider the following 97-residue polypeptide: Large ribosomal subunit protein uL23 (97 aa).

The protein belongs to the universal ribosomal protein uL23 family. As to quaternary structure, part of the 50S ribosomal subunit. Contacts protein L29, and trigger factor when it is bound to the ribosome.

In terms of biological role, one of the early assembly proteins it binds 23S rRNA. One of the proteins that surrounds the polypeptide exit tunnel on the outside of the ribosome. Forms the main docking site for trigger factor binding to the ribosome. In Pelagibacter ubique (strain HTCC1062), this protein is Large ribosomal subunit protein uL23.